Consider the following 528-residue polypeptide: Endoglucanase 24 (528 aa).

The N-terminal stretch at 1-24 (MGSKTKGCCGWLIVALVASLVATA) is a signal peptide. D109 serves as the catalytic Nucleophile. N-linked (GlcNAc...) asparagine glycosylation occurs at N259. The active site involves H446. A glycan (N-linked (GlcNAc...) asparagine) is linked at N487. Active-site residues include D492 and E501.

The protein belongs to the glycosyl hydrolase 9 (cellulase E) family.

The protein resides in the secreted. The catalysed reaction is Endohydrolysis of (1-&gt;4)-beta-D-glucosidic linkages in cellulose, lichenin and cereal beta-D-glucans.. This is Endoglucanase 24 from Oryza sativa subsp. japonica (Rice).